The following is a 619-amino-acid chain: Transcription factor 7-like 2 (619 aa).

The span at 1–11 shows a compositional bias: gly residues; that stretch reads MPQLNGGGGDD. The segment at 1 to 53 is CTNNB1-binding; it reads MPQLNGGGGDDLGANDELISFKDEGEQEEKSSENSSAERDLADVKSSLVNESE. Residues 1-96 are disordered; the sequence is MPQLNGGGGD…AKRQDGGLFK (96 aa). A compositionally biased stretch (basic and acidic residues) spans 19–43; that stretch reads ISFKDEGEQEEKSSENSSAERDLAD. Lysine 22 is covalently cross-linked (Glycyl lysine isopeptide (Lys-Gly) (interchain with G-Cter in SUMO2)). A compositionally biased stretch (polar residues) spans 47–57; the sequence is SLVNESETNQN. Residues 63–91 are compositionally biased toward basic and acidic residues; the sequence is EAERRPPPRSESFRDKSRESLEEAAKRQD. Phosphothreonine; by NLK occurs at positions 201 and 212. Positions 201–395 are mediates interaction with MAD2L2; sequence TPLITYSNEH…RRWHALSREE (195 aa). Residues 318–328 are compositionally biased toward polar residues; it reads TVKQESSQSDV. 4 disordered regions span residues 318–350, 420–441, 496–547, and 574–619; these read TVKQESSQSDVGSLHSSKHQDSKKEEEKKKPHI, RDNYGKKKKRKRDKQPGETNEH, CLSP…AHLS, and DLPP…KSLE. Lysine 320 participates in a covalent cross-link: Glycyl lysine isopeptide (Lys-Gly) (interchain with G-Cter in SUMO). Basic and acidic residues predominate over residues 335–346; it reads KHQDSKKEEEKK. Positions 350–418 form a DNA-binding region, HMG box; the sequence is IKKPLNAFML…LHMQLYPGWS (69 aa). Residues 425–430 carry the Nuclear localization signal motif; sequence KKKKRK. Residues 459–505 form a promoter-specific activation domain region; that stretch reads SAPKKCRARFGLDQQNNWCGPCRRKKKCVRYIQGEGSCLSPPSSDGS. Over residues 496 to 508 the composition is skewed to low complexity; that stretch reads CLSPPSSDGSLLD. Lysine 539 is covalently cross-linked (Glycyl lysine isopeptide (Lys-Gly) (interchain with G-Cter in SUMO2)). The span at 574–603 shows a compositional bias: low complexity; that stretch reads DLPPAALQPAAPSSSIAQPSTSSLHSHSSL. Over residues 604–619 the composition is skewed to polar residues; that stretch reads AGTQPQPLSLVTKSLE.

Belongs to the TCF/LEF family. In terms of assembly, interacts with TGFB1I1. Interacts with CTNNB1 (via the armadillo repeat); forms stable transcription complex. Interacts with EP300. Interacts with NLK. Interacts with CCDC85B (probably through the HMG box); prevents interaction with CTNNB1. Interacts with TNIK. Interacts with MAD2L2; prevents TCF7L2/TCF4 binding to promZIPK/DAPK3oters, negatively modulating its transcriptional activity. Interacts with ZIPK/DAPK3. Interacts with XIAP/BIRC4 and TLE3. Interacts with DDIT3/CHOP. The CTNNB1 and TCF7L2/TCF4 complex interacts with PML (isoform PML-4). Identified in a complex with CTNNB1 and FERMT2. Interacts with SPIN1. Interacts with C11orf84/SPINDOC in a SPIN1-dependent manner. Interacts with DAZAP2; the interaction results in localization of DAZAP2 to the nucleus. Post-translationally, in vitro, phosphorylated by TNIK. Phosphorylated at Thr-201 and/or Thr-212 by NLK. Phosphorylation by NLK at these sites inhibits DNA-binding by TCF7L2/TCF4, thereby preventing transcriptional activation of target genes of the canonical Wnt/beta-catenin signaling pathway. In terms of processing, polysumoylated. Sumoylation is enhanced by PIAS family members and desumoylation is enhanced by SENP2. Sumoylation/desumoylation regulates TCF7L2/TCF4 transcription activity in the Wnt/beta-catenin signaling pathway without altering interaction with CTNNB1 nor binding to DNA. As to expression, detected in epithelium from small intestine, with the highest expression at the top of the crypts and a gradient of expression from crypt to villus. Detected in colon epithelium and colon cancer, and in epithelium from mammary gland and carcinomas derived therefrom.

Its subcellular location is the nucleus. It is found in the PML body. Participates in the Wnt signaling pathway and modulates MYC expression by binding to its promoter in a sequence-specific manner. Acts as a repressor in the absence of CTNNB1, and as activator in its presence. Activates transcription from promoters with several copies of the Tcf motif 5'-CCTTTGATC-3' in the presence of CTNNB1. TLE1, TLE2, TLE3 and TLE4 repress transactivation mediated by TCF7L2/TCF4 and CTNNB1. Expression of dominant-negative mutants results in cell-cycle arrest in G1. Necessary for the maintenance of the epithelial stem-cell compartment of the small intestine. This is Transcription factor 7-like 2 (TCF7L2) from Homo sapiens (Human).